The chain runs to 374 residues: Calcium/calmodulin-dependent protein kinase type 1 (374 aa).

Positions 20–276 (YDFRDVLGTG…CEQALQHPWI (257 aa)) constitute a Protein kinase domain. ATP contacts are provided by residues 26–34 (LGTGAFSEV) and Lys49. Residue Lys59 forms a Glycyl lysine isopeptide (Lys-Gly) (interchain with G-Cter in ubiquitin) linkage. The Proton acceptor role is filled by Asp141. Thr177 carries the post-translational modification Phosphothreonine; by CaMKK1 and CaMKK2. Positions 263-264 (KR) match the Involved in nuclear import motif. The tract at residues 276–316 (IAGDTALDKNIHQSVSEQIKKNFAKSKWKQAFNATAVVRHM) is autoinhibitory domain. The tract at residues 296–317 (KNFAKSKWKQAFNATAVVRHMR) is calmodulin-binding. A Nuclear export signal motif is present at residues 315-321 (HMRKLQL).

Belongs to the protein kinase superfamily. CAMK Ser/Thr protein kinase family. CaMK subfamily. In terms of assembly, monomer. Interacts with XPO1. Phosphorylated by CaMKK1 and CaMKK2 on Thr-177. In terms of processing, polybiquitinated by the E3 ubiquitin-protein ligase complex SCF(FBXL12), leading to proteasomal degradation. Widely expressed.

The protein resides in the cytoplasm. Its subcellular location is the nucleus. The catalysed reaction is L-seryl-[protein] + ATP = O-phospho-L-seryl-[protein] + ADP + H(+). It catalyses the reaction L-threonyl-[protein] + ATP = O-phospho-L-threonyl-[protein] + ADP + H(+). Activated by Ca(2+)/calmodulin. Binding of calmodulin results in conformational change that relieves intrasteric autoinhibition and allows phosphorylation of Thr-177 within the activation loop by CaMKK1 or CaMKK2. Phosphorylation of Thr-177 results in several fold increase in total activity. Unlike CaMK4, is unable to exhibit autonomous activity after Ca(2+)/calmodulin activation. Calcium/calmodulin-dependent protein kinase that operates in the calcium-triggered CaMKK-CaMK1 signaling cascade and, upon calcium influx, regulates transcription activators activity, cell cycle, hormone production, cell differentiation, actin filament organization and neurite outgrowth. Recognizes the substrate consensus sequence [MVLIF]-x-R-x(2)-[ST]-x(3)-[MVLIF]. Regulates axonal extension and growth cone motility in hippocampal and cerebellar nerve cells. Upon NMDA receptor-mediated Ca(2+) elevation, promotes dendritic growth in hippocampal neurons and is essential in synapses for full long-term potentiation (LTP) and ERK2-dependent translational activation. Downstream of NMDA receptors, promotes the formation of spines and synapses in hippocampal neurons by phosphorylating ARHGEF7/BETAPIX on 'Ser-516', which results in the enhancement of ARHGEF7 activity and activation of RAC1. Promotes neuronal differentiation and neurite outgrowth by activation and phosphorylation of MARK2 on 'Ser-91', 'Ser-92', 'Ser-93' and 'Ser-294'. Promotes nuclear export of HDAC5 and binding to 14-3-3 by phosphorylation of 'Ser-259' and 'Ser-498' in the regulation of muscle cell differentiation. Regulates NUMB-mediated endocytosis by phosphorylation of NUMB on 'Ser-275' and 'Ser-294'. Involved in the regulation of basal and estrogen-stimulated migration of medulloblastoma cells through ARHGEF7/BETAPIX phosphorylation. Is required for proper activation of cyclin-D1/CDK4 complex during G1 progression in diploid fibroblasts. Plays a role in K(+) and ANG2-mediated regulation of the aldosterone synthase (CYP11B2) to produce aldosterone in the adrenal cortex. Phosphorylates EIF4G3/eIF4GII. In vitro phosphorylates CREB1, ATF1, CFTR, MYL9 and SYN1/synapsin I. This is Calcium/calmodulin-dependent protein kinase type 1 (Camk1) from Rattus norvegicus (Rat).